We begin with the raw amino-acid sequence, 254 residues long: Methyltransferase-like protein 23 (254 aa).

The tract at residues 1-27 (MKSFIFRQNPRKQQQEQNNLVDYSDSD) is disordered. Residues 11 to 21 (RKQQQEQNNLV) show a composition bias toward polar residues.

The protein belongs to the methyltransferase superfamily. METTL23 family.

Functionally, probable methyltransferase. The sequence is that of Methyltransferase-like protein 23 from Dictyostelium discoideum (Social amoeba).